The chain runs to 162 residues: Globin CTT-VIIB-7 (162 aa).

The N-terminal stretch at 1–16 (MKFFAVLALCVVGAIA) is a signal peptide. Residues 18–162 (PLSADEANLV…TYAVALKSLE (145 aa)) form the Globin domain. Residues His-76 and His-111 each contribute to the heme b site.

Belongs to the globin family. Homodimer.

The sequence is that of Globin CTT-VIIB-7 (CTT-7B7) from Chironomus thummi piger (Midge).